Here is a 415-residue protein sequence, read N- to C-terminus: MLFWTVLSMALSLRLALAQSGIERGPTASAPQGDLLFLLDSSASVSHYEFSRVREFVGQLVATMPFGPGALRASLVHVGSRPHTEFTFDQYSSGQAIQDAVRVAPQRMGDTNTGLALAYAKEQLFAEEAGARLGVPKVLVWVTDGASSDSVGPPMQELKDLGVTIFIVSTGRGNLLELLAAASAPAEKHLHFVDVDDLPIIARELRGAIIDAMQPHQLHASEILSNGFRLSWPPLLTADSGYYVLELVPSGKLAATRRQQLPGNATSWTWTDLNPDTDYEVSLLPESNVRLLRPQHLRVRTLQEEAGPERIVISHTRPRSLRVSWAPALGPDSTLGYLVQLGPLQGGSLEHVEVPAGQNSTTIQGLTPCTTYLVTVTAAFRSGRQRALSAKACTASGERIRVPQAMRPEAGLREP.

Residues 1-18 form the signal peptide; the sequence is MLFWTVLSMALSLRLALA. Positions 34–213 constitute a VWFA domain; it reads DLLFLLDSSA…ELRGAIIDAM (180 aa). 3 positions are modified to phosphoserine: serine 74, serine 80, and serine 93. 2 consecutive Fibronectin type-III domains span residues 214 to 305 and 307 to 405; these read QPHQ…LQEE and GPER…VPQA. Residue asparagine 264 is glycosylated (N-linked (GlcNAc...) asparagine). Cysteine 369 and cysteine 393 are joined by a disulfide.

In terms of assembly, homodimer or homomultimer; disulfide-linked. Interacts with HSPG2. In terms of processing, N-glycosylated.

It localises to the secreted. The protein localises to the extracellular space. It is found in the extracellular matrix. Its subcellular location is the basement membrane. In terms of biological role, promotes matrix assembly. Involved in the organization of skeletal muscles and in the formation of neuromuscular junctions. This chain is von Willebrand factor A domain-containing protein 1 (Vwa1), found in Rattus norvegicus (Rat).